We begin with the raw amino-acid sequence, 204 residues long: Small ribosomal subunit protein uS4 (204 aa).

Residues 25 to 45 are disordered; it reads AVPSRRAYPPGQHGQARKKRS. The S4 RNA-binding domain occupies 92-152; that stretch reads MRLDNIIFRL…NKENSRRLAE (61 aa).

The protein belongs to the universal ribosomal protein uS4 family. In terms of assembly, part of the 30S ribosomal subunit. Contacts protein S5. The interaction surface between S4 and S5 is involved in control of translational fidelity.

In terms of biological role, one of the primary rRNA binding proteins, it binds directly to 16S rRNA where it nucleates assembly of the body of the 30S subunit. Its function is as follows. With S5 and S12 plays an important role in translational accuracy. The chain is Small ribosomal subunit protein uS4 from Cyanothece sp. (strain PCC 7425 / ATCC 29141).